The chain runs to 418 residues: Probable serine hydroxymethyltransferase (418 aa).

(6S)-5,6,7,8-tetrahydrofolate is bound by residues Leu-118 and Gly-122–Leu-124. At Lys-226 the chain carries N6-(pyridoxal phosphate)lysine. Ser-351–Phe-353 serves as a coordination point for (6S)-5,6,7,8-tetrahydrofolate.

This sequence belongs to the SHMT family. In terms of assembly, homodimer. Requires pyridoxal 5'-phosphate as cofactor.

It is found in the cytoplasm. It carries out the reaction (6R)-5,10-methylene-5,6,7,8-tetrahydrofolate + glycine + H2O = (6S)-5,6,7,8-tetrahydrofolate + L-serine. The protein operates within one-carbon metabolism; tetrahydrofolate interconversion. Functionally, catalyzes the reversible interconversion of serine and glycine with tetrahydrofolate (THF) serving as the one-carbon carrier. This reaction serves as the major source of one-carbon groups required for the biosynthesis of purines, thymidylate, methionine, and other important biomolecules. This chain is Probable serine hydroxymethyltransferase, found in Mesomycoplasma hyopneumoniae (strain 7448) (Mycoplasma hyopneumoniae).